A 37-amino-acid chain; its full sequence is Large ribosomal subunit protein bL36 (37 aa).

This sequence belongs to the bacterial ribosomal protein bL36 family.

In Vibrio atlanticus (strain LGP32) (Vibrio splendidus (strain Mel32)), this protein is Large ribosomal subunit protein bL36.